Reading from the N-terminus, the 233-residue chain is Lipoprotein-releasing system ATP-binding protein LolD (233 aa).

Positions 6–233 (LQCDNLCKRY…TAELSLMGAE (228 aa)) constitute an ABC transporter domain. Residue 42–49 (GSSGSGKS) participates in ATP binding.

It belongs to the ABC transporter superfamily. Lipoprotein translocase (TC 3.A.1.125) family. In terms of assembly, the complex is composed of two ATP-binding proteins (LolD) and two transmembrane proteins (LolC and LolE).

The protein resides in the cell inner membrane. In terms of biological role, part of the ABC transporter complex LolCDE involved in the translocation of mature outer membrane-directed lipoproteins, from the inner membrane to the periplasmic chaperone, LolA. Responsible for the formation of the LolA-lipoprotein complex in an ATP-dependent manner. In Shigella flexneri, this protein is Lipoprotein-releasing system ATP-binding protein LolD.